We begin with the raw amino-acid sequence, 498 residues long: Lysine--tRNA ligase (498 aa).

Residues Glu-407 and Glu-414 each contribute to the Mg(2+) site.

The protein belongs to the class-II aminoacyl-tRNA synthetase family. As to quaternary structure, homodimer. Mg(2+) is required as a cofactor.

It localises to the cytoplasm. The catalysed reaction is tRNA(Lys) + L-lysine + ATP = L-lysyl-tRNA(Lys) + AMP + diphosphate. The protein is Lysine--tRNA ligase of Sinorhizobium medicae (strain WSM419) (Ensifer medicae).